The sequence spans 412 residues: Serine hydroxymethyltransferase (412 aa).

(6S)-5,6,7,8-tetrahydrofolate contacts are provided by residues Leu117 and Gly121 to Leu123. Lys226 is modified (N6-(pyridoxal phosphate)lysine). (6S)-5,6,7,8-tetrahydrofolate contacts are provided by residues Glu242 and Ser350–Phe352.

It belongs to the SHMT family. In terms of assembly, homodimer. It depends on pyridoxal 5'-phosphate as a cofactor.

The protein resides in the cytoplasm. It catalyses the reaction (6R)-5,10-methylene-5,6,7,8-tetrahydrofolate + glycine + H2O = (6S)-5,6,7,8-tetrahydrofolate + L-serine. It functions in the pathway one-carbon metabolism; tetrahydrofolate interconversion. Its pathway is amino-acid biosynthesis; glycine biosynthesis; glycine from L-serine: step 1/1. Functionally, catalyzes the reversible interconversion of serine and glycine with tetrahydrofolate (THF) serving as the one-carbon carrier. Also exhibits THF-independent aldolase activity toward beta-hydroxyamino acids, producing glycine and aldehydes, via a retro-aldol mechanism. The chain is Serine hydroxymethyltransferase from Methanosarcina mazei (strain ATCC BAA-159 / DSM 3647 / Goe1 / Go1 / JCM 11833 / OCM 88) (Methanosarcina frisia).